The chain runs to 161 residues: Ribosome maturation factor RimP (161 aa).

It belongs to the RimP family.

It localises to the cytoplasm. Functionally, required for maturation of 30S ribosomal subunits. The sequence is that of Ribosome maturation factor RimP from Myxococcus xanthus (strain DK1622).